The chain runs to 278 residues: Digeranylgeranylglyceryl phosphate synthase (278 aa).

Helical transmembrane passes span 17–37, 40–60, 91–111, 129–149, 153–173, 204–224, 226–246, and 257–277; these read MASFGAFIGGLIASYFNLEMV, LIFASIVVFLVCGFGNALNDI, LLVFTGLCISLFNITCFLMAV, IIGNLIVAYLTGSVFIFGGIA, IDVTIMLFLCALFAMWSREII, LLLVFAVLLSSLPYLFGFFGI, YLISVVFCDLLFLIGIFPLLI, and SRNIKIVTNLVLVAFVIGSFF.

The protein belongs to the UbiA prenyltransferase family. DGGGP synthase subfamily. The cofactor is Mg(2+).

The protein localises to the cell membrane. The enzyme catalyses sn-3-O-(geranylgeranyl)glycerol 1-phosphate + (2E,6E,10E)-geranylgeranyl diphosphate = 2,3-bis-O-(geranylgeranyl)-sn-glycerol 1-phosphate + diphosphate. It functions in the pathway membrane lipid metabolism; glycerophospholipid metabolism. Functionally, prenyltransferase that catalyzes the transfer of the geranylgeranyl moiety of geranylgeranyl diphosphate (GGPP) to the C2 hydroxyl of (S)-3-O-geranylgeranylglyceryl phosphate (GGGP). This reaction is the second ether-bond-formation step in the biosynthesis of archaeal membrane lipids. This chain is Digeranylgeranylglyceryl phosphate synthase, found in Methanococcus maripaludis (strain C5 / ATCC BAA-1333).